The chain runs to 199 residues: Cell division protein SepF (199 aa).

The segment at 15–79 (TEDGDETEVQ…PQPQQKSSTE (65 aa)) is disordered.

This sequence belongs to the SepF family. As to quaternary structure, homodimer. Interacts with FtsZ.

Its subcellular location is the cytoplasm. Cell division protein that is part of the divisome complex and is recruited early to the Z-ring. Probably stimulates Z-ring formation, perhaps through the cross-linking of FtsZ protofilaments. Its function overlaps with FtsA. This chain is Cell division protein SepF, found in Streptococcus sanguinis (strain SK36).